Reading from the N-terminus, the 304-residue chain is PTB domain-containing engulfment adapter protein 1 (304 aa).

Phosphothreonine is present on T16. One can recognise a PID domain in the interval 21 to 176; sequence SKHFIPYNAK…AGLQKRIQDL (156 aa). Residues 158–202 are a coiled coil; it reads KDVETRKQIAGLQKRIQDLETENMELKNKVQDLENQLRITQVSAP. Phosphoserine is present on S223. Residues 223–246 form a disordered region; sequence SPISHQSSMPTRNGTQPPPVPSRS. The segment covering 225-237 has biased composition (polar residues); that stretch reads ISHQSSMPTRNGT.

This sequence belongs to the ced-6 family. In terms of assembly, homodimer. Interacts with clathrin. Interacts with GDP-bound ARF6, but not with GTP-bound ARF6. Part of a complex composed of GULP1, ACAP1 and ARF6. Interacts with ACAP1, LRP1, MEGF10 and STAB2. In terms of tissue distribution, widely expressed. Detected in macrophages, pancreas, kidney, skeletal muscle, heart, colon, intestine, lung, placenta and ovary.

The protein resides in the cytoplasm. May function as an adapter protein. Required for efficient phagocytosis of apoptotic cells. Modulates cellular glycosphingolipid and cholesterol transport. May play a role in the internalization and endosomal trafficking of various LRP1 ligands, such as PSAP. Increases cellular levels of GTP-bound ARF6. The polypeptide is PTB domain-containing engulfment adapter protein 1 (GULP1) (Homo sapiens (Human)).